The following is a 442-amino-acid chain: Probable serine/threonine-protein kinase PBL17 (442 aa).

A lipid anchor (N-myristoyl glycine) is attached at Gly2. Cys4 carries S-palmitoyl cysteine lipidation. Thr79 is modified (phosphothreonine). The region spanning 90–370 is the Protein kinase domain; it reads FRPDYILGEG…NHVVEVLETL (281 aa). ATP is bound by residues 96-104 and Lys125; that span reads LGEGGFGVV. Tyr170 carries the phosphotyrosine modification. Catalysis depends on Asp220, which acts as the Proton acceptor. Ser254 carries the post-translational modification Phosphoserine. Thr255 and Thr260 each carry phosphothreonine. At Tyr268 the chain carries Phosphotyrosine. A disordered region spans residues 385–442; that stretch reads HSRGKSVTLYEASSDSQGTRDGNGQRRRRPESGRSKSEAAVDTEKYVSTLSEPDTTKI. Residues 395–406 show a composition bias toward polar residues; sequence EASSDSQGTRDG. A compositionally biased stretch (basic and acidic residues) spans 414–429; sequence PESGRSKSEAAVDTEK. Over residues 430 to 442 the composition is skewed to polar residues; the sequence is YVSTLSEPDTTKI.

It belongs to the protein kinase superfamily. Ser/Thr protein kinase family.

The protein localises to the cell membrane. It catalyses the reaction L-seryl-[protein] + ATP = O-phospho-L-seryl-[protein] + ADP + H(+). The enzyme catalyses L-threonyl-[protein] + ATP = O-phospho-L-threonyl-[protein] + ADP + H(+). Functionally, may be involved in plant defense signaling. This is Probable serine/threonine-protein kinase PBL17 from Arabidopsis thaliana (Mouse-ear cress).